The following is a 448-amino-acid chain: Exodeoxyribonuclease 7 large subunit (448 aa).

It belongs to the XseA family. Heterooligomer composed of large and small subunits.

The protein localises to the cytoplasm. The catalysed reaction is Exonucleolytic cleavage in either 5'- to 3'- or 3'- to 5'-direction to yield nucleoside 5'-phosphates.. Bidirectionally degrades single-stranded DNA into large acid-insoluble oligonucleotides, which are then degraded further into small acid-soluble oligonucleotides. This is Exodeoxyribonuclease 7 large subunit from Geobacillus kaustophilus (strain HTA426).